The chain runs to 366 residues: Cytochrome c peroxidase, mitochondrial (366 aa).

Catalysis depends on histidine 123, which acts as the Proton acceptor. Positions 195-206 are enriched in basic and acidic residues; that stretch reads IEWRPGRVDDNT. Residues 195–218 are disordered; the sequence is IEWRPGRVDDNTASKVPPNGRLPD. Histidine 247 contacts heme b. The Tryptophan radical intermediate role is filled by tryptophan 263.

It belongs to the peroxidase family. Cytochrome c peroxidase subfamily. In terms of assembly, forms a one-to-one complex with cytochrome c. Heme b serves as cofactor.

The protein localises to the mitochondrion matrix. It is found in the mitochondrion intermembrane space. It catalyses the reaction 2 Fe(II)-[cytochrome c] + H2O2 + 2 H(+) = 2 Fe(III)-[cytochrome c] + 2 H2O. Destroys radicals which are normally produced within the cells and which are toxic to biological systems. The chain is Cytochrome c peroxidase, mitochondrial (CCP1) from Candida albicans (strain SC5314 / ATCC MYA-2876) (Yeast).